The primary structure comprises 501 residues: Bifunctional purine biosynthesis protein PurH (501 aa).

In terms of domain architecture, MGS-like spans 1–144 (MKKRALISVF…KNFKDVVVLS (144 aa)).

Belongs to the PurH family.

The catalysed reaction is (6R)-10-formyltetrahydrofolate + 5-amino-1-(5-phospho-beta-D-ribosyl)imidazole-4-carboxamide = 5-formamido-1-(5-phospho-D-ribosyl)imidazole-4-carboxamide + (6S)-5,6,7,8-tetrahydrofolate. The enzyme catalyses IMP + H2O = 5-formamido-1-(5-phospho-D-ribosyl)imidazole-4-carboxamide. It functions in the pathway purine metabolism; IMP biosynthesis via de novo pathway; 5-formamido-1-(5-phospho-D-ribosyl)imidazole-4-carboxamide from 5-amino-1-(5-phospho-D-ribosyl)imidazole-4-carboxamide (10-formyl THF route): step 1/1. The protein operates within purine metabolism; IMP biosynthesis via de novo pathway; IMP from 5-formamido-1-(5-phospho-D-ribosyl)imidazole-4-carboxamide: step 1/1. In Clostridium perfringens (strain 13 / Type A), this protein is Bifunctional purine biosynthesis protein PurH.